The following is a 124-amino-acid chain: Kalata-B1 (124 aa).

Residues 1–22 (MAKFTVCLLLCLLLAAFVGAFG) form the signal peptide. The propeptide occupies 23–88 (SELSDSHKTT…QVFLKQLQLK (66 aa)). The segment at residues 89 to 117 (GLPVCGETCVGGTCNTPGCTCSWPVCTRN) is a cross-link (cyclopeptide (Gly-Asn)). 3 disulfides stabilise this stretch: Cys-93/Cys-107, Cys-97/Cys-109, and Cys-102/Cys-114. Residues 118 to 124 (GLPSLAA) constitute a propeptide that is removed on maturation.

The protein belongs to the cyclotide family. Moebius subfamily. In terms of processing, kalata-B1 is a cyclic peptide which occurs in three forms: with unmodified Trp-111, with Trp-111 oxidized to form oxindolylalanine and with Trp-111 oxidized to form N-formylkynurenine. Oxidation is enhanced by exposure to sunlight. In terms of tissue distribution, leaves and stems. Lower in roots.

Its function is as follows. Probably participates in a plant defense mechanism. Has antibiotic activity. Has a diuretic effect. Has a uterotonic effect in humans. Active against the Gram-positive S.aureus with a minimum inhibition concentration of approximately 0.2 microM. Relatively ineffective against Gram-negative bacteria such as E.coli and P.aeruginosa. Inhibitory effect on the growth and development of larvae from H.punctigera. The unmodified form has hemolytic activity, the oxidized form lacks hemolytic activity. If the protein is linearized, hemolytic activity is lost. The protein is Kalata-B1 (OAK1) of Oldenlandia affinis.